Here is a 604-residue protein sequence, read N- to C-terminus: MEPPRGPPASGAEPSRAVGTVKVYLPNKQRTVVTVRDGMSVYDSLDKALKVRGLNQDCCVVYRLIKGRKTVTAWDTAIAPLDGEELIVEVLEDVPLTMHNFVRKTFFSLAFCDFCLKFLFHGFRCQTCGYKFHQHCSSKVPTVCVDMSTNRRQFYHSIQDLSGGSRQQEVPSNLSVNELLTPQGPSPFTQQRDQEHFSFPAPANPPLQRIRSTSTPNVHMVSTTAPMDSSLMQFTAQSFSTDAAGRGGDGAPRGSPSPASVSSGRKSPHSKLPAEQRERKSLADEKKKVKNLGYRDSGYYWEVPPSEVQLLKRIGTGSFGTVFRGRWHGDVAVKVLKVAQPTAEQAQAFKNEMQVLRKTRHVNILLFMGFMTRPGFAIITQWCEGSSLYHHLHVADTRFDMVQLIDVARQTAQGMDYLHAKNIIHRDLKSNNIFLHEGLTVKIGDFGLATVKTRWSGAQPLEQPSGSVLWMAAEVIRMQDPNPYSFQSDVYAYGVVLYELMTGSLPYSHIGSRDQIIFMVGRGYLSPDLSKIFSNCPKAMRRLLTDCLKFQREERPLFPQILATIELLQRSLPKIERSASEPSLHRTQADELPACLLSAARLVP.

An RBD domain is found at 19–91; it reads GTVKVYLPNK…DGEELIVEVL (73 aa). A Phorbol-ester/DAG-type zinc finger spans residues 98–144; sequence MHNFVRKTFFSLAFCDFCLKFLFHGFRCQTCGYKFHQHCSSKVPTVC. The Zn(2+) site is built by histidine 99, cysteine 112, cysteine 115, cysteine 125, cysteine 128, histidine 133, cysteine 136, and cysteine 144. Phosphoserine is present on residues serine 157 and serine 162. Disordered stretches follow at residues 178 to 222 and 241 to 287; these read ELLT…HMVS and TDAA…DEKK. The residue at position 181 (threonine 181) is a Phosphothreonine. A Phosphoserine modification is found at serine 186. A compositionally biased stretch (polar residues) spans 210-222; that stretch reads IRSTSTPNVHMVS. Residues 252 to 265 are compositionally biased toward low complexity; it reads PRGSPSPASVSSGR. 2 positions are modified to phosphoserine: serine 255 and serine 267. Basic and acidic residues predominate over residues 272-287; the sequence is LPAEQRERKSLADEKK. Residues 308-568 enclose the Protein kinase domain; that stretch reads VQLLKRIGTG…PQILATIELL (261 aa). Residues 314–322 and lysine 334 each bind ATP; that span reads IGTGSFGTV. Threonine 316 bears the Phosphothreonine mark. Catalysis depends on aspartate 427, which acts as the Proton acceptor.

It belongs to the protein kinase superfamily. TKL Ser/Thr protein kinase family. RAF subfamily. Interacts with TH1L/NELFD. It depends on Zn(2+) as a cofactor. In terms of processing, dephosphorylation by the SHOC2-MRAS-PP1c (SMP) complex consisting of SHOC2, GTP-bound M-Ras/MRAS and the catalytic subunit of protein phosphatase 1 (PPP1CA, PPP1CB or PPP1CC); this relieves inactivation and stimulates kinase activity.

The catalysed reaction is L-seryl-[protein] + ATP = O-phospho-L-seryl-[protein] + ADP + H(+). It carries out the reaction L-threonyl-[protein] + ATP = O-phospho-L-threonyl-[protein] + ADP + H(+). In terms of biological role, involved in the transduction of mitogenic signals from the cell membrane to the nucleus. May also regulate the TOR signaling cascade. Phosphorylates PFKFB2. The sequence is that of Serine/threonine-protein kinase A-Raf (Araf) from Rattus norvegicus (Rat).